The chain runs to 294 residues: Ribosomal RNA small subunit methyltransferase A (294 aa).

6 residues coordinate S-adenosyl-L-methionine: asparagine 31, leucine 33, glycine 58, glutamate 79, aspartate 104, and asparagine 129.

It belongs to the class I-like SAM-binding methyltransferase superfamily. rRNA adenine N(6)-methyltransferase family. RsmA subfamily.

The protein resides in the cytoplasm. It carries out the reaction adenosine(1518)/adenosine(1519) in 16S rRNA + 4 S-adenosyl-L-methionine = N(6)-dimethyladenosine(1518)/N(6)-dimethyladenosine(1519) in 16S rRNA + 4 S-adenosyl-L-homocysteine + 4 H(+). In terms of biological role, specifically dimethylates two adjacent adenosines (A1518 and A1519) in the loop of a conserved hairpin near the 3'-end of 16S rRNA in the 30S particle. May play a critical role in biogenesis of 30S subunits. The polypeptide is Ribosomal RNA small subunit methyltransferase A (Oceanobacillus iheyensis (strain DSM 14371 / CIP 107618 / JCM 11309 / KCTC 3954 / HTE831)).